The chain runs to 238 residues: Cell division protein A (238 aa).

Interacts with CdvB.

It is found in the cytoplasm. The protein localises to the nucleoid. It localises to the cell membrane. Part of a cell division machinery. The CdvA, CdvB and CdvC proteins polymerize between segregating nucleoids and persist throughout cell division, forming a successively smaller structure during constriction. CdvA is a membrane interacting protein that recruits ESCRT-III homologs to the membrane. In Sulfolobus acidocaldarius (strain ATCC 33909 / DSM 639 / JCM 8929 / NBRC 15157 / NCIMB 11770), this protein is Cell division protein A.